The sequence spans 468 residues: Ribulose bisphosphate carboxylase large chain (468 aa).

Lys5 is modified (N6,N6,N6-trimethyllysine). The substrate site is built by Asn114 and Thr164. The active-site Proton acceptor is the Lys166. Lys168 serves as a coordination point for substrate. Residues Lys192, Asp194, and Glu195 each coordinate Mg(2+). The residue at position 192 (Lys192) is an N6-carboxylysine. His285 functions as the Proton acceptor in the catalytic mechanism. Substrate is bound by residues Arg286, His318, and Ser370.

This sequence belongs to the RuBisCO large chain family. Type I subfamily. In terms of assembly, heterohexadecamer of 8 large chains and 8 small chains; disulfide-linked. The disulfide link is formed within the large subunit homodimers. Requires Mg(2+) as cofactor. In terms of processing, the disulfide bond which can form in the large chain dimeric partners within the hexadecamer appears to be associated with oxidative stress and protein turnover.

The protein resides in the plastid. The protein localises to the chloroplast. It catalyses the reaction 2 (2R)-3-phosphoglycerate + 2 H(+) = D-ribulose 1,5-bisphosphate + CO2 + H2O. The catalysed reaction is D-ribulose 1,5-bisphosphate + O2 = 2-phosphoglycolate + (2R)-3-phosphoglycerate + 2 H(+). Its function is as follows. RuBisCO catalyzes two reactions: the carboxylation of D-ribulose 1,5-bisphosphate, the primary event in carbon dioxide fixation, as well as the oxidative fragmentation of the pentose substrate in the photorespiration process. Both reactions occur simultaneously and in competition at the same active site. This chain is Ribulose bisphosphate carboxylase large chain, found in Salvia divinorum (Maria pastora).